Here is a 151-residue protein sequence, read N- to C-terminus: Urease accessory protein UreE (151 aa).

The protein belongs to the UreE family.

Its subcellular location is the cytoplasm. In terms of biological role, involved in urease metallocenter assembly. Binds nickel. Probably functions as a nickel donor during metallocenter assembly. This Bacillus cereus (strain ATCC 10987 / NRS 248) protein is Urease accessory protein UreE.